The following is a 354-amino-acid chain: Ion-translocating oxidoreductase complex subunit D (354 aa).

3 helical membrane passes run 9–28, 67–87, and 117–137; these read IMLH…LYLF, LLSG…WIAV, and VALL…LPLG. At threonine 165 the chain carries FMN phosphoryl threonine. The next 5 membrane-spanning stretches (helical) occupy residues 200–220, 222–242, 249–269, 277–297, and 301–321; these read GSLG…LLAL, IIHW…AALA, VHGG…ALFI, PISR…VFVI, and GNFP…VPLI.

It belongs to the NqrB/RnfD family. The complex is composed of six subunits: RnfA, RnfB, RnfC, RnfD, RnfE and RnfG. It depends on FMN as a cofactor.

It localises to the cell inner membrane. In terms of biological role, part of a membrane-bound complex that couples electron transfer with translocation of ions across the membrane. This chain is Ion-translocating oxidoreductase complex subunit D, found in Stutzerimonas stutzeri (Pseudomonas stutzeri).